The following is a 378-amino-acid chain: Succinyl-diaminopimelate desuccinylase (378 aa).

His68 is a Zn(2+) binding site. Residue Asp70 is part of the active site. A Zn(2+)-binding site is contributed by Asp101. Glu135 acts as the Proton acceptor in catalysis. Glu136, Glu164, and His350 together coordinate Zn(2+).

Belongs to the peptidase M20A family. DapE subfamily. Homodimer. Requires Zn(2+) as cofactor. It depends on Co(2+) as a cofactor.

The enzyme catalyses N-succinyl-(2S,6S)-2,6-diaminopimelate + H2O = (2S,6S)-2,6-diaminopimelate + succinate. It functions in the pathway amino-acid biosynthesis; L-lysine biosynthesis via DAP pathway; LL-2,6-diaminopimelate from (S)-tetrahydrodipicolinate (succinylase route): step 3/3. Its function is as follows. Catalyzes the hydrolysis of N-succinyl-L,L-diaminopimelic acid (SDAP), forming succinate and LL-2,6-diaminopimelate (DAP), an intermediate involved in the bacterial biosynthesis of lysine and meso-diaminopimelic acid, an essential component of bacterial cell walls. In Acinetobacter baumannii (strain ATCC 17978 / DSM 105126 / CIP 53.77 / LMG 1025 / NCDC KC755 / 5377), this protein is Succinyl-diaminopimelate desuccinylase.